Reading from the N-terminus, the 106-residue chain is PTS system fructose-like EIIB component 2 (106 aa).

In terms of domain architecture, PTS EIIB type-2 spans 1–103; that stretch reads MTKIIAVTAC…IMSKIEAHLA (103 aa). The active-site Phosphocysteine intermediate is Cys10. Phosphocysteine; by EIIA is present on Cys10.

The protein resides in the cytoplasm. It catalyses the reaction D-fructose(out) + N(pros)-phospho-L-histidyl-[protein] = D-fructose 1-phosphate(in) + L-histidyl-[protein]. In terms of biological role, the phosphoenolpyruvate-dependent sugar phosphotransferase system (sugar PTS), a major carbohydrate active transport system, catalyzes the phosphorylation of incoming sugar substrates concomitantly with their translocation across the cell membrane. The enzyme II FrwABC PTS system is involved in fructose transport. This Escherichia coli O157:H7 protein is PTS system fructose-like EIIB component 2 (frwB).